A 219-amino-acid polypeptide reads, in one-letter code: Probable cutinase 4 (219 aa).

Positions 1–17 (MILPSLLVASLSALAAA) are cleaved as a signal peptide. 2 cysteine pairs are disulfide-bonded: C41–C120 and C67–C81. N99 carries an N-linked (GlcNAc...) asparagine glycan. Residue S131 is the Nucleophile of the active site. Residues C182 and C189 are joined by a disulfide bond. D186 is an active-site residue. H199 serves as the catalytic Proton donor/acceptor.

Belongs to the cutinase family.

The protein resides in the secreted. It catalyses the reaction cutin + H2O = cutin monomers.. Its function is as follows. Catalyzes the hydrolysis of complex carboxylic polyesters found in the cell wall of plants. Degrades cutin, a macromolecule that forms the structure of the plant cuticle. The polypeptide is Probable cutinase 4 (Aspergillus terreus (strain NIH 2624 / FGSC A1156)).